Reading from the N-terminus, the 334-residue chain is N-acetyl-gamma-glutamyl-phosphate reductase (334 aa).

C154 is a catalytic residue.

It belongs to the NAGSA dehydrogenase family. Type 1 subfamily.

It localises to the cytoplasm. The enzyme catalyses N-acetyl-L-glutamate 5-semialdehyde + phosphate + NADP(+) = N-acetyl-L-glutamyl 5-phosphate + NADPH + H(+). It participates in amino-acid biosynthesis; L-arginine biosynthesis; N(2)-acetyl-L-ornithine from L-glutamate: step 3/4. Its function is as follows. Catalyzes the NADPH-dependent reduction of N-acetyl-5-glutamyl phosphate to yield N-acetyl-L-glutamate 5-semialdehyde. The chain is N-acetyl-gamma-glutamyl-phosphate reductase from Shigella flexneri.